A 161-amino-acid polypeptide reads, in one-letter code: Ribosome maturation factor RimP (161 aa).

The protein belongs to the RimP family.

It localises to the cytoplasm. Its function is as follows. Required for maturation of 30S ribosomal subunits. This chain is Ribosome maturation factor RimP, found in Rickettsia africae (strain ESF-5).